A 711-amino-acid polypeptide reads, in one-letter code: MKQLFATTSRGFEELLKVELTELGAQEAKVVQGGVHYQADDETLYRTLLWSRLASRILFPLIETKIYSDLDLYAAVSGFNWLAQFDERVTFFVDFNGTNQEIRHTQFGAMRVKDGIVDYFERQGKTRPDVDKIQPDVRIHAYLNRENLVISLDLSGEALHLRGYREDAGQAPLRETLAAAIVMRSGWQVGSPLVDPMCGSGTLLIEAAQIEAKIAPQLYRLHWGFDFWKAHNQSAWEKVKNEAIELAEEKQSEIQPHFYGFDLDHRVLKKAQKNAQNGGVSHLIKWQQADVAALKNPRLNEVGTVICNPPYGERLGTTPALIALYSVFGQRLKKEFCGWNVSVFSSESTLLDCLRMRASRQFKAKNGPLDCVQKNYQVSERKSDAITDEKELEFNRTSEVAPDFANRLQKNIKKISKWAKQQELDAYRLYDADLPEYNLAVDRYADYIVVQEYAAPKNIDENKARQRLLDAVTATLQVTGVETNKLILKVRQKQKGTNQYEKLANKGEYFYVNEYGAQLWVNLTDYLDTGLFLDHRLTRKMIGELAKGKDFLNLFAYTGSATVHAALGGAKSTTTVDMSNTYLNWAEQNLILNDIEGKQHKLIQADCLQWLEKCDRQFDLIFVDPPTFSNSKRMEESWDVQRDHVKLMSNLKRVLSNNGTIVFSNNKRGFKMNLVALEELGLSAIEISHKTLPLDFERNKQIHNCWMIQHI.

The THUMP domain maps to 43 to 154 (TLYRTLLWSR…RENLVISLDL (112 aa)).

Belongs to the methyltransferase superfamily. RlmKL family.

The protein resides in the cytoplasm. The catalysed reaction is guanosine(2445) in 23S rRNA + S-adenosyl-L-methionine = N(2)-methylguanosine(2445) in 23S rRNA + S-adenosyl-L-homocysteine + H(+). It carries out the reaction guanosine(2069) in 23S rRNA + S-adenosyl-L-methionine = N(2)-methylguanosine(2069) in 23S rRNA + S-adenosyl-L-homocysteine + H(+). Functionally, specifically methylates the guanine in position 2445 (m2G2445) and the guanine in position 2069 (m7G2069) of 23S rRNA. In Haemophilus influenzae (strain PittEE), this protein is Ribosomal RNA large subunit methyltransferase K/L.